Reading from the N-terminus, the 207-residue chain is Outer-membrane lipoprotein carrier protein (207 aa).

Positions 1–21 are cleaved as a signal peptide; it reads MRLIRMLLLPVLAVTTLSAHA.

This sequence belongs to the LolA family. In terms of assembly, monomer.

The protein resides in the periplasm. Functionally, participates in the translocation of lipoproteins from the inner membrane to the outer membrane. Only forms a complex with a lipoprotein if the residue after the N-terminal Cys is not an aspartate (The Asp acts as a targeting signal to indicate that the lipoprotein should stay in the inner membrane). In Pseudomonas fluorescens (strain ATCC BAA-477 / NRRL B-23932 / Pf-5), this protein is Outer-membrane lipoprotein carrier protein.